Here is a 565-residue protein sequence, read N- to C-terminus: Oxygen-dependent choline dehydrogenase (565 aa).

Residue 6–35 coordinates FAD; the sequence is DYIIVGAGSAGNTLATRLTEDAGVTVLLLE. The segment at 182 to 201 is disordered; that stretch reads QQEGFGPMDRTVTKNGRRSS. The active-site Proton acceptor is the His-475.

This sequence belongs to the GMC oxidoreductase family. The cofactor is FAD.

It carries out the reaction choline + A = betaine aldehyde + AH2. The catalysed reaction is betaine aldehyde + NAD(+) + H2O = glycine betaine + NADH + 2 H(+). The protein operates within amine and polyamine biosynthesis; betaine biosynthesis via choline pathway; betaine aldehyde from choline (cytochrome c reductase route): step 1/1. Involved in the biosynthesis of the osmoprotectant glycine betaine. Catalyzes the oxidation of choline to betaine aldehyde and betaine aldehyde to glycine betaine at the same rate. The sequence is that of Oxygen-dependent choline dehydrogenase from Pseudomonas putida (strain ATCC 47054 / DSM 6125 / CFBP 8728 / NCIMB 11950 / KT2440).